The primary structure comprises 496 residues: MGQLISFFQEIPVFLQEALNIALVAVSLIAVIKGIINLYKSGLFQFIFFLLLAGRSCSDGTFKIGLHTEFQSVTLTMQRLLANHSNELPSLCMLNNSFYYMKGGVNTFLIRVSDISVLMKEHDVSIYEPEDLGNCLNKSDSSWAIHWFSNALGHDWLMDPPMLCRNKTKKEGSNIQFNISKADDVRVYGKKIRNGMRHLFRGFHDPCEEGKKCYLTINQCGDPSSFDYCGMDHLSKCQFDHVNTLHFLVRSKTHLNFERSLKAFFSWSLTDSSGKDMPGGYCLEEWMLIAAKMKCFGNTAVAKCNQNHDSEFCDMLRLFDYNKNAIKTLNDESKKEINLLSQTVNALISDNLLMKNKIKELMSIPYCNYTKFWYVNHTLTGQHTLPRCWLIRNGSYLNTSEFRNDWILESDHLISEMLSKEYAERQGKTPITLVDICFWSTVFFTASLFLHLVGIPTHRHLKGEACPLPHKLDSFGGCRCGKYPRLRKPTIWHKRH.

Gly-2 is lipidated: N-myristoyl glycine; by host. Residues 2 to 17 lie on the Extracellular side of the membrane; the sequence is GQLISFFQEIPVFLQE. A helical membrane pass occupies residues 18-32; the sequence is ALNIALVAVSLIAVI. Lys-33 is a topological domain (cytoplasmic). The helical transmembrane segment at 34-53 threads the bilayer; sequence GIINLYKSGLFQFIFFLLLA. 2 consecutive stretches face the extracellular side: residues 54-58 and 59-435; these read GRSCS and DGTF…TLVD. Cys-57 provides a ligand contact to Zn(2+). N-linked (GlcNAc...) asparagine; by host glycans are attached at residues Asn-83, Asn-95, Asn-137, Asn-166, and Asn-178. Intrachain disulfides connect Cys-92–Cys-237, Cys-135–Cys-164, Cys-207–Cys-213, Cys-282–Cys-295, Cys-304–Cys-313, and Cys-367–Cys-388. Residues Asn-368, Asn-376, Asn-393, and Asn-398 are each glycosylated (N-linked (GlcNAc...) asparagine; by host). Residues 436–456 form a helical membrane-spanning segment; the sequence is ICFWSTVFFTASLFLHLVGIP. Residues 457–496 are Cytoplasmic-facing; that stretch reads THRHLKGEACPLPHKLDSFGGCRCGKYPRLRKPTIWHKRH. Zn(2+)-binding residues include His-458, His-460, Cys-466, His-470, Cys-478, Cys-480, and His-496.

This sequence belongs to the arenaviridae GPC protein family. Homotetramer; disulfide-linked. Interacts with host TFRC. In terms of assembly, homotetramer. GP2 homotetramers bind through ionic interactions with GP1 homotetramers to form the GP complex together with the stable signal peptide. The GP-C polyprotein interacts with the host protease MBTPS1/SKI-1 resulting in the polyprotein processing. In terms of processing, specific enzymatic cleavages in vivo yield mature proteins. GP-C polyprotein is cleaved in the endoplasmic reticulum by the host protease MBTPS1. Only cleaved glycoprotein is incorporated into virions. The SSP remains stably associated with the GP complex following cleavage by signal peptidase and plays crucial roles in the trafficking of GP through the secretory pathway. Post-translationally, myristoylation is necessary for GP2-mediated fusion activity.

The protein localises to the virion membrane. It localises to the host endoplasmic reticulum membrane. Its subcellular location is the host Golgi apparatus membrane. The protein resides in the host cell membrane. Class I viral fusion protein that directs fusion of viral and host endosomal membranes, leading to delivery of the nucleocapsid into the cytoplasm. Membrane fusion is mediated by irreversible conformational changes induced upon acidification in the endosome. In terms of biological role, stable signal peptide (SSP): cleaved and functions as a signal peptide. In addition, it is also retained as the third component of the GP complex. The SSP is required for efficient glycoprotein expression, post-translational maturation cleavage of GP1 and GP2, glycoprotein transport to the cell surface plasma membrane, formation of infectious virus particles, and acid pH-dependent glycoprotein-mediated cell fusion. Functionally, interacts with the host receptor. Mediates virus attachment to host TFRC. This attachment induces virion internalization predominantly through clathrin-mediated endocytosis. The protein is Pre-glycoprotein polyprotein GP complex of Machupo virus (MACV).